The sequence spans 1011 residues: DNA-directed RNA polymerase subunit beta'' (1011 aa).

Zn(2+) is bound by residues Cys216, Cys282, Cys288, and Cys291.

The protein belongs to the RNA polymerase beta' chain family. RpoC2 subfamily. In plastids the minimal PEP RNA polymerase catalytic core is composed of four subunits: alpha, beta, beta', and beta''. When a (nuclear-encoded) sigma factor is associated with the core the holoenzyme is formed, which can initiate transcription. It depends on Zn(2+) as a cofactor.

The protein localises to the plastid. Its subcellular location is the chloroplast. It catalyses the reaction RNA(n) + a ribonucleoside 5'-triphosphate = RNA(n+1) + diphosphate. Functionally, DNA-dependent RNA polymerase catalyzes the transcription of DNA into RNA using the four ribonucleoside triphosphates as substrates. This is DNA-directed RNA polymerase subunit beta'' from Ostreococcus tauri.